A 628-amino-acid polypeptide reads, in one-letter code: MTISDIGSQATTHTPVKASKADALKTPAHRSETDARFEEDARDLHRILPASRKVYIEGSRPDIQVPMREITLDPTPIQGVSESEWEQNPPFYVYDTSGVYTDPNAAIDLTKGLPKLREGWIDERGDTEQLAGLSSSYGLARARDISTANLRFAHIDKPRRAKAVDGKVGNVTQLHYARRGIITPEMEYIAIRETQKQHELTDMRQHEGETFGAHTPAIITPEFVRSEVAAGRAIIPNNINHPESEPMIIGRNFLVKINANIGNSALGSSIDEEVSKMTWATRWGADNIMDLSTGNHIHETREWLIRNSPVPIGTVPIYQALEKVDGVAEDLTWEIFRDTLIEQAEQGVDYFTIHAGVLLEYVPLTAGRLTGIVSRGGSIMAQWCMFHNKESFLYTHFEDICEIMKQYDVAFSLGDGLRPGCLQDANDEAQFGELRTLGELTQVAWKHDVQVMIEGPGHVAMNRIKENMDLQLEVCADAPFYTLGPLTTDIAPGYDHITSAIGAAMIGWFGTAMLCYVTPKEHLGLPNKKDVKDGIITYKIAAHAADLAKGHPGAQARDNALSKARFEFRWDDQFNLALDPDTAREFHDETLPKDAHKTAHFCSMCGPKFCSMKITQNVREYAKGLNAQ.

Residues 1-14 (MTISDIGSQATTHT) are compositionally biased toward polar residues. A disordered region spans residues 1-37 (MTISDIGSQATTHTPVKASKADALKTPAHRSETDARF). Residues 19 to 37 (SKADALKTPAHRSETDARF) are compositionally biased toward basic and acidic residues. Residues Asn-260, Met-289, Tyr-318, His-354, 374–376 (SRG), 415–418 (DGLR), and Glu-454 each bind substrate. Position 458 (His-458) interacts with Zn(2+). Tyr-481 contacts substrate. His-522 is a Zn(2+) binding site. [4Fe-4S] cluster-binding residues include Cys-602, Cys-605, and Cys-610.

Belongs to the ThiC family. In terms of assembly, homodimer. Requires [4Fe-4S] cluster as cofactor.

It carries out the reaction 5-amino-1-(5-phospho-beta-D-ribosyl)imidazole + S-adenosyl-L-methionine = 4-amino-2-methyl-5-(phosphooxymethyl)pyrimidine + CO + 5'-deoxyadenosine + formate + L-methionine + 3 H(+). The protein operates within cofactor biosynthesis; thiamine diphosphate biosynthesis. In terms of biological role, catalyzes the synthesis of the hydroxymethylpyrimidine phosphate (HMP-P) moiety of thiamine from aminoimidazole ribotide (AIR) in a radical S-adenosyl-L-methionine (SAM)-dependent reaction. The protein is Phosphomethylpyrimidine synthase of Psychrobacter cryohalolentis (strain ATCC BAA-1226 / DSM 17306 / VKM B-2378 / K5).